Here is a 207-residue protein sequence, read N- to C-terminus: Large ribosomal subunit protein uL4 (207 aa).

The disordered stretch occupies residues Arg44–Gly76. Positions Gly60–Gly71 are enriched in basic residues.

This sequence belongs to the universal ribosomal protein uL4 family. As to quaternary structure, part of the 50S ribosomal subunit.

Its function is as follows. One of the primary rRNA binding proteins, this protein initially binds near the 5'-end of the 23S rRNA. It is important during the early stages of 50S assembly. It makes multiple contacts with different domains of the 23S rRNA in the assembled 50S subunit and ribosome. In terms of biological role, forms part of the polypeptide exit tunnel. The protein is Large ribosomal subunit protein uL4 of Ruminiclostridium cellulolyticum (strain ATCC 35319 / DSM 5812 / JCM 6584 / H10) (Clostridium cellulolyticum).